Reading from the N-terminus, the 141-residue chain is Hemoglobin subunit alpha (141 aa).

The Globin domain maps to 1 to 141; it reads VLSPADKTNI…VSTVLTSKYR (141 aa). S3 is subject to Phosphoserine. K7 is subject to N6-succinyllysine. T8 is modified (phosphothreonine). K11 carries the N6-succinyllysine modification. At K16 the chain carries N6-acetyllysine; alternate. K16 carries the post-translational modification N6-succinyllysine; alternate. Phosphotyrosine is present on Y24. The residue at position 35 (S35) is a Phosphoserine. K40 is subject to N6-succinyllysine. S49 is subject to Phosphoserine. H58 lines the O2 pocket. H87 provides a ligand contact to heme b. S102 carries the phosphoserine modification. A Phosphothreonine modification is found at T108. S124 bears the Phosphoserine mark. Phosphothreonine occurs at positions 134 and 137. S138 is subject to Phosphoserine.

Belongs to the globin family. Heterotetramer of two alpha chains and two beta chains. In terms of tissue distribution, red blood cells.

In terms of biological role, involved in oxygen transport from the lung to the various peripheral tissues. Hemopressin acts as an antagonist peptide of the cannabinoid receptor CNR1. Hemopressin-binding efficiently blocks cannabinoid receptor CNR1 and subsequent signaling. The chain is Hemoglobin subunit alpha (HBA) from Chrysocyon brachyurus (Maned wolf).